We begin with the raw amino-acid sequence, 2962 residues long: Sex determination and dosage compensation protein sdc-2 (2962 aa).

Disordered regions lie at residues 1-28 and 1061-1110; these read MSDE…ADPD and DKRS…QVDP. The segment covering 15 to 27 has biased composition (acidic residues); that stretch reads SFNESDSPDEADP. Coiled-coil stretches lie at residues 995-1085 and 1140-1268; these read LESA…LADK and REER…KRVS. Disordered regions lie at residues 1535 to 1554 and 2198 to 2227; these read PASL…GSPV and LDSS…NQLD. Positions 2212 to 2225 are enriched in acidic residues; sequence FEDSPSEDENDENQ.

In terms of assembly, component of the SDC complex, which consists of sdc-1, sdc-2 and sdc-3. Within the complex, interacts with sdc-1 and sdc-3. As to expression, expressed in hermaphrodites (XX), but absent in males (XO) (at protein level).

The protein localises to the chromosome. Component of the SDC complex that functions in sex determination and in X chromosome dosage compensation specifically in hermaphrodite (XX) animals. Required for the recruitment of the condensin I-like dosage compensation complex to the male sex-determining autosomal gene her-1, thereby contributing to its repression and initiating hermaphrodite sexual development. Plays a central role in X-chromosome recognition and in the recruitment and assembly of the dosage compensation complex and the dosage compensation protein dpy-21 onto the X chromosomes in hermaphrodites, which leads to a reduction of X-linked gene transcription and an equalization of X-linked gene expression between the sexes. May confer protection against toxicity induced by heavy metals such as arsenite. The polypeptide is Sex determination and dosage compensation protein sdc-2 (Caenorhabditis elegans).